The primary structure comprises 687 residues: Cytochrome b/c1 (687 aa).

A helical membrane pass occupies residues 46-66; it reads FGAILSFMLGMQILTGVILAM. Residues His-96 and His-110 each coordinate heme b. 2 consecutive transmembrane segments (helical) span residues 126-146 and 160-180; these read VLWI…FMGY and VITN…TLLW. Heme b is bound by residues His-197 and His-211. 6 consecutive transmembrane segments (helical) span residues 199–219, 247–267, 305–325, 337–357, 363–383, and 410–430; these read LLPF…HVAG, FGVA…PNYL, LAGV…PWLD, LAKQ…YLGA, IYVI…LIVL, and AVAS…GSLQ. Residues 404 to 434 form an internal signal sequence region; that stretch reads LAKGGKAVASVAIALVAAGALFLGSLQDARA. A Cytochrome c domain is found at 458–643; the sequence is GALQRGLKVY…TVAQYSKDVT (186 aa). Residues Cys-471, Cys-474, His-475, and Met-616 each coordinate heme c. The helical transmembrane segment at 666 to 678 threads the bilayer; that stretch reads VFLIIFAGLMYFT.

It belongs to the cytochrome b family. The main subunits of complex b-c1 are: cytochrome b, cytochrome c1 and the Rieske protein. Requires heme b as cofactor. Heme c is required as a cofactor. In terms of processing, the protein is post-translationally processed into cytochrome b and c1. This occurs by processing between residues 434 and 435 without processing between cytochrome b and the N-terminal of the putative signal sequence domain.

The protein localises to the cell inner membrane. Functionally, component of the ubiquinol-cytochrome c reductase complex (complex III or cytochrome b-c1 complex), which is a respiratory chain that generates an electrochemical potential coupled to ATP synthesis. c1 functions as an electron donor to cytochrome c. This is Cytochrome b/c1 (fbcH) from Bradyrhizobium diazoefficiens (strain JCM 10833 / BCRC 13528 / IAM 13628 / NBRC 14792 / USDA 110).